Reading from the N-terminus, the 408-residue chain is LL-diaminopimelate aminotransferase (408 aa).

Substrate is bound by residues Tyr15 and Gly42. Pyridoxal 5'-phosphate contacts are provided by residues Tyr72, Ser108–Lys109, Tyr132, Asn187, Tyr218, and Ser246–Ser248. Substrate-binding residues include Lys109, Tyr132, and Asn187. Lys249 bears the N6-(pyridoxal phosphate)lysine mark. 2 residues coordinate pyridoxal 5'-phosphate: Arg257 and Asn292. Residues Asn292 and Arg388 each coordinate substrate.

This sequence belongs to the class-I pyridoxal-phosphate-dependent aminotransferase family. LL-diaminopimelate aminotransferase subfamily. Homodimer. Requires pyridoxal 5'-phosphate as cofactor.

The enzyme catalyses (2S,6S)-2,6-diaminopimelate + 2-oxoglutarate = (S)-2,3,4,5-tetrahydrodipicolinate + L-glutamate + H2O + H(+). Its pathway is amino-acid biosynthesis; L-lysine biosynthesis via DAP pathway; LL-2,6-diaminopimelate from (S)-tetrahydrodipicolinate (aminotransferase route): step 1/1. Functionally, involved in the synthesis of meso-diaminopimelate (m-DAP or DL-DAP), required for both lysine and peptidoglycan biosynthesis. Catalyzes the direct conversion of tetrahydrodipicolinate to LL-diaminopimelate. This is LL-diaminopimelate aminotransferase from Parasynechococcus marenigrum (strain WH8102).